The following is a 341-amino-acid chain: Probable dual-specificity RNA methyltransferase RlmN (341 aa).

Catalysis depends on Glu-88, which acts as the Proton acceptor. The Radical SAM core domain maps to 94–314 (EGDRATLCIS…ESHGFTCTIR (221 aa)). An intrachain disulfide couples Cys-101 to Cys-325. [4Fe-4S] cluster-binding residues include Cys-108, Cys-112, and Cys-115. Residues 153-154 (GE), Ser-185, 206-208 (SLH), and His-282 each bind S-adenosyl-L-methionine. Cys-325 acts as the S-methylcysteine intermediate in catalysis.

The protein belongs to the radical SAM superfamily. RlmN family. [4Fe-4S] cluster serves as cofactor.

The protein resides in the cytoplasm. The enzyme catalyses adenosine(2503) in 23S rRNA + 2 reduced [2Fe-2S]-[ferredoxin] + 2 S-adenosyl-L-methionine = 2-methyladenosine(2503) in 23S rRNA + 5'-deoxyadenosine + L-methionine + 2 oxidized [2Fe-2S]-[ferredoxin] + S-adenosyl-L-homocysteine. It carries out the reaction adenosine(37) in tRNA + 2 reduced [2Fe-2S]-[ferredoxin] + 2 S-adenosyl-L-methionine = 2-methyladenosine(37) in tRNA + 5'-deoxyadenosine + L-methionine + 2 oxidized [2Fe-2S]-[ferredoxin] + S-adenosyl-L-homocysteine. Its function is as follows. Specifically methylates position 2 of adenine 2503 in 23S rRNA and position 2 of adenine 37 in tRNAs. This is Probable dual-specificity RNA methyltransferase RlmN from Porphyromonas gingivalis (strain ATCC BAA-308 / W83).